The primary structure comprises 169 residues: Ureidoglycolate lyase (169 aa).

The protein belongs to the ureidoglycolate lyase family. In terms of assembly, homodimer. Ni(2+) is required as a cofactor.

The enzyme catalyses (S)-ureidoglycolate = urea + glyoxylate. It functions in the pathway nitrogen metabolism; (S)-allantoin degradation. In terms of biological role, catalyzes the catabolism of the allantoin degradation intermediate (S)-ureidoglycolate, generating urea and glyoxylate. Involved in the utilization of allantoin as nitrogen source. The protein is Ureidoglycolate lyase of Pseudomonas paraeruginosa (strain DSM 24068 / PA7) (Pseudomonas aeruginosa (strain PA7)).